The primary structure comprises 436 residues: UPF0597 protein YhaM (436 aa).

The protein belongs to the UPF0597 family.

The polypeptide is UPF0597 protein YhaM (Escherichia coli O127:H6 (strain E2348/69 / EPEC)).